Here is a 241-residue protein sequence, read N- to C-terminus: MSNILKIFVDGLWKKNSSLVQLLGLCPVLAITVNAINAIGLGLATTLVLICSNATISLIKNNIQKDFRIPIYIIIISSVVSSIDLVIKAYAFNLYQSLGIFIPLIITNCIVCNRADLIAVHNSVLVSILDGLSIGLGSTLTMFLLGSIREIIGHGTLFFGIEHVLGESFRFLYIEVLDKNSVFLLFAFPSGAFMILGIVLAGKNFLDEVLGIIEHKNVCVCSNKVLVYKDGNKKIESQKSL.

A run of 6 helical transmembrane segments spans residues 22-42 (LLGLCPVLAITVNAINAIGLG), 69-89 (IPIYIIIISSVVSSIDLVIKA), 91-111 (AFNLYQSLGIFIPLIITNCIV), 124-144 (VLVSILDGLSIGLGSTLTMFL), 157-177 (LFFGIEHVLGESFRFLYIEVL), and 182-202 (VFLLFAFPSGAFMILGIVLAG).

This sequence belongs to the NqrDE/RnfAE family. In terms of assembly, the complex is composed of six subunits: RnfA, RnfB, RnfC, RnfD, RnfE and RnfG.

It is found in the cell inner membrane. Its function is as follows. Part of a membrane-bound complex that couples electron transfer with translocation of ions across the membrane. This Buchnera aphidicola subsp. Baizongia pistaciae (strain Bp) protein is Ion-translocating oxidoreductase complex subunit E.